Consider the following 1269-residue polypeptide: MEATGVLPFVRGVDLSGNDFKGGYFPENVKAMTSLRWLKLNRTGLCYLPEELAALQKLEHLSVSHNNLTTLHGELSSLPSLRAIVARANSLKNSGVPDDIFKLDDLSVLDLSHNQLTECPRELENAKNMLVLNLSHNSIDTIPNQLFINLTDLLYLDLSENRLESLPPQMRRLVHLQTLVLNGNPLLHAQLRQLPAMTALQTLHLRSTQRTQSNLPTSLEGLSNLADVDLSCNDLTRVPECLYTLPSLRRLNLSSNQITELSLCIDQWVHVETLNLSRNQLTSLPSAICKLSKLKKLYLNSNKLDFDGLPSGIGKLTNLEEFMAANNNLELVPESLCRCPKLRKLVLNKNHLVTLPEAIHFLTEIEVLDVRENPNLVMPPKPADRAAEWYNIDFSLQNQLRLAGASPATVAAAAAAGSGPKDPMARKMRLRRRKDSAQDDQAKQVLKGMSDVAQEKNKKQEESADARAPSGKVRRWDQGLEKPRLDYSEFFTEDVGQLPGLTIWQIENFVPVLVEEAFHGKFYEADCYIVLKTFLDDSGSLNWEIYYWIGGEATLDKKACSAIHAVNLRNYLGAECRTVREEMGDESEEFLQVFDNDISYIEGGTASGFYTVEDTHYVTRMYRVYGKKNIKLEPVPLKGTSLDPRFVFLLDRGLDIYVWRGAQATLSSTTKARLFAEKINKNERKGKAEITLLVQGQELPEFWEALGGEPSEIKKHVPEDFWPPQPKLYKVGLGLGYLELPQINYKLSVEHKQRPKVELMPRMRLLQSLLDTRCVYILDCWSDVFIWLGRKSPRLVRAAALKLGQELCGMLHRPRHATVSRSLEGTEAQVFKAKFKNWDDVLTVDYTRNAEAVLQSPGLSGKVKRDAEKKDQMKADLTALFLPRQPPMSLAEAEQLMEEWNEDLDGMEGFVLEGKKFARLPEEEFGHFYTQDCYVFLCRYWVPVEYEEEEKKEDKEEKAEGKEGEEATAEAEEKQPEEDFQCIVYFWQGREASNMGWLTFTFSLQKKFESLFPGKLEVVRMTQQQENPKFLSHFKRKFIIHRGKRKAVQGAQQPSLYQIRTNGSALCTRCIQINTDSSLLNSEFCFILKVPFESEDNQGIVYAWVGRASDPDEAKLAEDILNTMFDTSYSKQVINEGEEPENFFWVGIGAQKPYDDDAEYMKHTRLFRCSNEKGYFAVTEKCSDFCQDDLADDDIMLLDNGQEVYMWVGTQTSQVEIKLSLKACQVYIQHMRSKEHERPRRLRLVRKGNEQHAFTRCFHAWSAFCKALA.

The residue at position 1 (M1) is an N-acetylmethionine. The interval 1–427 (MEATGVLPFV…SGPKDPMARK (427 aa)) is interaction with LRRFIP1 and LRRFIP2. LRR repeat units lie at residues 7–32 (LPFVRGVDLSGNDFKGGYFPENVKAM), 33–55 (TSLRWLKLNRTGLCYLPEELAAL), 56–78 (QKLEHLSVSHNNLTTLHGELSSL), 80–103 (SLRAIVARANSLKNSGVPDDIFKL), 104–126 (DDLSVLDLSHNQLTECPRELENA), 127–149 (KNMLVLNLSHNSIDTIPNQLFIN), 150–173 (LTDLLYLDLSENRLESLPPQMRRL), 175–196 (HLQTLVLNGNPLLHAQLRQLPA), 197–222 (MTALQTLHLRSTQRTQSNLPTSLEGL), 223–245 (SNLADVDLSCNDLTRVPECLYTL), 247–268 (SLRRLNLSSNQITELSLCIDQW), 269–291 (VHVETLNLSRNQLTSLPSAICKL), 293–316 (KLKKLYLNSNKLDFDGLPSGIGKL), 318–339 (NLEEFMAANNNLELVPESLCRC), 340–363 (PKLRKLVLNKNHLVTLPEAIHFLT), and 365–385 (IEVLDVRENPNLVMPPKPADR). Residue K21 is modified to N6-acetyllysine. S406 carries the phosphoserine modification. S436 carries the phosphoserine; by SGK3 modification. The tract at residues 452 to 473 (VAQEKNKKQEESADARAPSGKV) is disordered. The span at 453–465 (AQEKNKKQEESAD) shows a compositional bias: basic and acidic residues. The segment at 495–827 (VGQLPGLTIW…TVSRSLEGTE (333 aa)) is interaction with ACTL6A. Gelsolin-like repeat units follow at residues 509–591 (FVPV…EEFL), 629–703 (NIKL…PEFW), and 758–831 (ELMP…AQVF). A Phosphothreonine; by SGK3 modification is found at T818. S856 and S860 each carry phosphoserine. The tract at residues 951-975 (KKEDKEEKAEGKEGEEATAEAEEKQ) is disordered. The segment covering 952 to 965 (KEDKEEKAEGKEGE) has biased composition (basic and acidic residues). The segment covering 966–975 (EATAEAEEKQ) has biased composition (acidic residues). 2 Gelsolin-like repeats span residues 1075 to 1143 (TDSS…PENF) and 1181 to 1254 (KCSD…QHAF).

Interacts with actin, ACTL6A, NCOA2 and CARM1. Interacts with LRRFIP1, LRRFIP2 and MYD88. Upon LPS stimulation, LRRFIP2 competes for MYD88-binding. LRRFIP1 constitutively blocks the interaction with MyD88, even in the absence of LPS. Interacts with the nuclear receptors ESR1 and THRB. Interacts with SGK3. Interacts (via the gelsolin-like region) with TMOD1. Interacts with (via the gelsolin-like region) TMOD3. Interacts with LMOD2, VCL, GSN and DES. As to expression, strongest expression in skeletal muscle with high expression also in the heart and lung.

The protein resides in the nucleus. It is found in the cytoplasm. Its subcellular location is the cytoskeleton. It localises to the microtubule organizing center. The protein localises to the centrosome. The protein resides in the cell projection. It is found in the podosome. Its subcellular location is the cell junction. It localises to the focal adhesion. In terms of biological role, is a regulator of actin polymerization, required for proper myofibril organization and regulation of the length of sarcomeric thin filaments. It also plays a role in the assembly of cardiomyocyte cell adhesion complexes. Regulates cytoskeletal rearrangements involved in cytokinesis and cell migration, by inhibiting Rac1-dependent paxillin phosphorylation. May play a role as coactivator in transcriptional activation by hormone-activated nuclear receptors (NR) and acts in cooperation with NCOA2 and CARM1. Involved in estrogen hormone signaling. In Homo sapiens (Human), this protein is Protein flightless-1 homolog (FLII).